The following is a 211-amino-acid chain: MSASLFQRLTGLRVSRETYEKLDHFVDLFGKWSKVINLVANSTKDQIWHRHVIDSAQLFKLRPNPQHWIDLGSGGGFPGVITAILLSEKSDGWVDLVESNNKKAAFLRTALMETGARGRVHPVRIEEAHKSLSDCDTISARALADLDLLFSYASPWAEKNKNLNFLLHKGRDYQSEVNNARDRWTFDLIIHPSVLEADSVILEVSGLARSK.

S-adenosyl-L-methionine contacts are provided by residues glycine 72, phenylalanine 77, isoleucine 125 to glutamate 126, and arginine 141.

This sequence belongs to the methyltransferase superfamily. RNA methyltransferase RsmG family.

It is found in the cytoplasm. The catalysed reaction is guanosine(527) in 16S rRNA + S-adenosyl-L-methionine = N(7)-methylguanosine(527) in 16S rRNA + S-adenosyl-L-homocysteine. Functionally, specifically methylates the N7 position of guanine in position 527 of 16S rRNA. This chain is Ribosomal RNA small subunit methyltransferase G, found in Allorhizobium ampelinum (strain ATCC BAA-846 / DSM 112012 / S4) (Agrobacterium vitis (strain S4)).